Here is a 166-residue protein sequence, read N- to C-terminus: MNSQACLLLQKQLKDLCKHPVDGFSAGLVDEKNIFEWSVTIIGPPDTLYEGGFFYAIMSFPQNYPNSPPTVRFTSDIWHPNVYPDGRVCISILHPPGDDPSGYELASERWTPVHTVESIMLSIISMLSGPNDESPANVEAAKEWREKRDEFKKKVSRCVRKSQEMF.

Residues Gln4–Glu164 form the UBC core domain. Catalysis depends on Cys89, which acts as the Glycyl thioester intermediate.

The protein belongs to the ubiquitin-conjugating enzyme family.

The catalysed reaction is S-ubiquitinyl-[E1 ubiquitin-activating enzyme]-L-cysteine + [E2 ubiquitin-conjugating enzyme]-L-cysteine = [E1 ubiquitin-activating enzyme]-L-cysteine + S-ubiquitinyl-[E2 ubiquitin-conjugating enzyme]-L-cysteine.. Its pathway is protein modification; protein ubiquitination. Accepts the ubiquitin from the E1 complex and catalyzes its covalent attachment to other proteins. Involved in the formation of multiubiquitin chains. Signal the protein for selective degradation. The polypeptide is Ubiquitin-conjugating enzyme E2 13 (UBC13) (Arabidopsis thaliana (Mouse-ear cress)).